Consider the following 418-residue polypeptide: NADH-quinone oxidoreductase subunit D (418 aa).

The protein belongs to the complex I 49 kDa subunit family. In terms of assembly, NDH-1 is composed of 14 different subunits. Subunits NuoB, C, D, E, F, and G constitute the peripheral sector of the complex.

The protein localises to the cell inner membrane. It catalyses the reaction a quinone + NADH + 5 H(+)(in) = a quinol + NAD(+) + 4 H(+)(out). In terms of biological role, NDH-1 shuttles electrons from NADH, via FMN and iron-sulfur (Fe-S) centers, to quinones in the respiratory chain. The immediate electron acceptor for the enzyme in this species is believed to be ubiquinone. Couples the redox reaction to proton translocation (for every two electrons transferred, four hydrogen ions are translocated across the cytoplasmic membrane), and thus conserves the redox energy in a proton gradient. This is NADH-quinone oxidoreductase subunit D from Neisseria gonorrhoeae (strain ATCC 700825 / FA 1090).